Reading from the N-terminus, the 151-residue chain is Mating pheromone 3 (151 aa).

A signal peptide spans Met-1–Ala-16. The propeptide occupies Phe-17–Lys-52.

It localises to the secreted. Its function is as follows. Mating ciliate pheromones (or gamones) are diffusible extracellular communication signals that distinguish different intraspecific classes of cells commonly referred to as 'mating types'. They prepare the latter for conjugation by changing their cell surface properties. This is Mating pheromone 3 (PHR3) from Euplotoides octocarinatus (Freshwater ciliate).